A 734-amino-acid polypeptide reads, in one-letter code: Cytoplasmic polyadenylation element-binding protein 3 (734 aa).

Disordered stretches follow at residues 1–31 (MDRN…RNVP), 98–185 (GSKK…AARN), and 220–283 (RGSL…LPPR). Residues 16-26 (PAEHPGDEKSG) show a composition bias toward basic and acidic residues. 2 stretches are compositionally biased toward low complexity: residues 121 to 140 (SRRT…SPSR) and 232 to 242 (KSFSSTTTSSS). A compositionally biased stretch (basic and acidic residues) spans 243–256 (PEKEREKEKEKIEQ). The segment covering 259–275 (YGTTQRQSVNSQQSSAS) has biased composition (polar residues). The region spanning 294-316 (IFVGGVPWDITEAALKDSFGEFG) is the RRM domain. 2 disordered regions span residues 564–593 (KAYQ…SNNS) and 630–657 (TVYD…SNSN). Residues 576 to 593 (LSSNSPSKARDGQNSNNS) show a composition bias toward low complexity.

Functionally, cytoplasmic polyadenylation element binding protein that binds to and regulates the translation of specific mRNAs. The sequence is that of Cytoplasmic polyadenylation element-binding protein 3 (cpb-3) from Caenorhabditis japonica.